Reading from the N-terminus, the 88-residue chain is Small ribosomal subunit protein bS16 (88 aa).

This sequence belongs to the bacterial ribosomal protein bS16 family.

The protein is Small ribosomal subunit protein bS16 of Staphylococcus saprophyticus subsp. saprophyticus (strain ATCC 15305 / DSM 20229 / NCIMB 8711 / NCTC 7292 / S-41).